The sequence spans 694 residues: Elongation factor G 2 (694 aa).

The 277-residue stretch at 6-282 folds into the tr-type G domain; it reads SKLRNIGISA…GVVDYLPDPT (277 aa). GTP contacts are provided by residues 15 to 22, 82 to 86, and 136 to 139; these read AHIDSGKT, DTPGH, and NKCD.

The protein belongs to the TRAFAC class translation factor GTPase superfamily. Classic translation factor GTPase family. EF-G/EF-2 subfamily.

Its subcellular location is the cytoplasm. Its function is as follows. Catalyzes the GTP-dependent ribosomal translocation step during translation elongation. During this step, the ribosome changes from the pre-translocational (PRE) to the post-translocational (POST) state as the newly formed A-site-bound peptidyl-tRNA and P-site-bound deacylated tRNA move to the P and E sites, respectively. Catalyzes the coordinated movement of the two tRNA molecules, the mRNA and conformational changes in the ribosome. The protein is Elongation factor G 2 of Anaeromyxobacter dehalogenans (strain 2CP-C).